Here is an 86-residue protein sequence, read N- to C-terminus: Large ribosomal subunit protein bL27 (86 aa).

Residues Met-1–Ser-26 form a disordered region.

Belongs to the bacterial ribosomal protein bL27 family.

The sequence is that of Large ribosomal subunit protein bL27 from Rickettsia canadensis (strain McKiel).